Reading from the N-terminus, the 127-residue chain is Large ribosomal subunit protein eL8 (127 aa).

This sequence belongs to the eukaryotic ribosomal protein eL8 family. In terms of assembly, part of the 50S ribosomal subunit. Probably part of the RNase P complex.

Its subcellular location is the cytoplasm. Its function is as follows. Multifunctional RNA-binding protein that recognizes the K-turn motif in ribosomal RNA, the RNA component of RNase P, box H/ACA, box C/D and box C'/D' sRNAs. In Desulfurococcus amylolyticus (strain DSM 18924 / JCM 16383 / VKM B-2413 / 1221n) (Desulfurococcus kamchatkensis), this protein is Large ribosomal subunit protein eL8.